Here is a 439-residue protein sequence, read N- to C-terminus: Large ribosomal subunit protein mL65 (439 aa).

This sequence belongs to the mitochondrion-specific ribosomal protein mL65 family. As to quaternary structure, component of the mitochondrial large ribosomal subunit (mt-LSU). Mature mammalian 55S mitochondrial ribosomes consist of a small (28S) and a large (39S) subunit. The 28S small subunit contains a 12S ribosomal RNA (12S mt-rRNA) and 30 different proteins. The 39S large subunit contains a 16S rRNA (16S mt-rRNA), a copy of mitochondrial valine transfer RNA (mt-tRNA(Val)), which plays an integral structural role, and 52 different proteins. mL65 forms a heterodimer with mL37. Heart, skeletal muscle, kidney and liver. Lower expression in placenta and peripheral blood leukocytes.

The protein resides in the mitochondrion. The protein is Large ribosomal subunit protein mL65 (MRPS30) of Homo sapiens (Human).